The chain runs to 116 residues: Prefoldin subunit beta (116 aa).

The protein belongs to the prefoldin subunit beta family. In terms of assembly, heterohexamer of two alpha and four beta subunits.

It is found in the cytoplasm. Functionally, molecular chaperone capable of stabilizing a range of proteins. Seems to fulfill an ATP-independent, HSP70-like function in archaeal de novo protein folding. The chain is Prefoldin subunit beta from Methanobrevibacter smithii (strain ATCC 35061 / DSM 861 / OCM 144 / PS).